The sequence spans 365 residues: Decapping nuclease RAI1 (365 aa).

A divalent metal cation is bound at residue Glu-165. Cys-197 and Glu-214 together coordinate substrate. Positions 216, 234, and 235 each coordinate a divalent metal cation. The substrate site is built by Lys-236 and Gln-260.

Belongs to the DXO/Dom3Z family. Interacts with rat1; the interaction is direct, stabilizes rat1 protein structure and stimulates its exoribonuclease activity. The interaction also stimulates rai1 pyrophosphohydrolase activity, probably by recruiting it to mRNA substrates. Requires a divalent metal cation as cofactor.

Its subcellular location is the nucleus. The enzyme catalyses a 5'-end NAD(+)-phospho-ribonucleoside in mRNA + H2O = a 5'-end phospho-ribonucleoside in mRNA + NAD(+) + H(+). It catalyses the reaction a 5'-end (N(7)-methyl 5'-triphosphoguanosine)-ribonucleoside-ribonucleotide in mRNA + H2O = a (N(7)-methyl 5'-triphosphoguanosine)-nucleoside + a 5'-end phospho-ribonucleoside in mRNA + H(+). It carries out the reaction a 5'-end triphospho-ribonucleoside in mRNA + H2O = a 5'-end phospho-ribonucleoside in mRNA + diphosphate + H(+). In terms of biological role, decapping enzyme for NAD-capped RNAs: specifically hydrolyzes the nicotinamide adenine dinucleotide (NAD) cap from a subset of RNAs by removing the entire NAD moiety from the 5'-end of an NAD-capped RNA. The NAD-cap is present at the 5'-end of some RNAs and snoRNAs. In contrast to the canonical 5'-end N7 methylguanosine (m7G) cap, the NAD cap promotes mRNA decay. Also acts as a non-canonical decapping enzyme that removes the entire cap structure of m7G capped or incompletely capped RNAs. Has decapping activity toward incomplete 5'-end m7G cap mRNAs such as unmethylated 5'-end-capped RNA (cap0), while it has no activity toward 2'-O-ribose methylated m7G cap (cap1). Also possesses RNA 5'-pyrophosphohydrolase activity by hydrolyzing the 5'-end triphosphate to release pyrophosphates. Stimulates exoribonuclease activity of Rat1, allowing it to degrade RNAs with stable secondary structure more effectively. In Aspergillus fumigatus (strain ATCC MYA-4609 / CBS 101355 / FGSC A1100 / Af293) (Neosartorya fumigata), this protein is Decapping nuclease RAI1 (rai1).